Here is a 216-residue protein sequence, read N- to C-terminus: Probable glutamine ABC transporter permease protein GlnM (216 aa).

The 189-residue stretch at 17–205 (FYHTLLASVI…VLTIPLSIGV (189 aa)) folds into the ABC transmembrane type-1 domain. 5 consecutive transmembrane segments (helical) span residues 21–41 (LLASVIALAGSFVLGVAVAVM), 63–83 (IPLLLITFVFYFGLPNAGLRL), 85–105 (GFQAGTVALTIYTSAFIAEAI), 132–152 (LHIILPQAIKIVIPPLGNQFL), and 181–201 (LVVFDVYIFVALFYLVLTIPL).

It belongs to the binding-protein-dependent transport system permease family. As to quaternary structure, the complex is composed of two ATP-binding proteins (GlnQ), two transmembrane proteins (GlnM and GlnP) and a solute-binding protein (GlnH).

The protein resides in the cell membrane. Functionally, part of the ABC transporter complex GlnHMPQ involved in glutamine transport. Probably responsible for the translocation of the substrate across the membrane. The polypeptide is Probable glutamine ABC transporter permease protein GlnM (glnM) (Bacillus subtilis (strain 168)).